The chain runs to 856 residues: PR domain zinc finger protein 1 (856 aa).

Positions P115–C233 constitute an SET domain. Disordered stretches follow at residues T357 to L399 and G532 to A571. Composition is skewed to low complexity over residues S373–S393 and S542–S556. Residues H558–K605 are interaction with PIAS1. C2H2-type zinc fingers lie at residues Y606 to H628, F634 to H656, H662 to H684, and Y690 to H712. K847 participates in a covalent cross-link: Glycyl lysine isopeptide (Lys-Gly) (interchain with G-Cter in SUMO1); alternate. K847 is covalently cross-linked (Glycyl lysine isopeptide (Lys-Gly) (interchain with G-Cter in SUMO2); alternate).

The protein belongs to the class V-like SAM-binding methyltransferase superfamily. In terms of assembly, interacts with PRMT5. Interacts with FBXO10. Interacts with FBXO11. Interacts with multiple nuclear sumoylation E3 ligases, including CBX4, PIAS1, PIAS2, PIAS3, PIAS4, PML and RNF4, but not RANBP2. Interacts with LDB1, SMARCD3 and SMARCC1. Interacts with EEIG1; following TNFSF11/RANKL stimulation in bone marrow-derived macrophages, the interaction promotes the binding of PRDM1/BLIMP1 to the gene promoter of IRF8. Sumoylation at Lys-847 by PIAS1 increases transcriptional repressor activity, and is critical for plasma cell differentiation. Can be sumoylated with SUMO1 and SUMO2 by PML. Degradation of the wild-type protein mostly depends upon sumoylation, rather than ubiquitination. Desumoylated by SENP1 and SENP6. In terms of processing, ubiquitinated by SCF(FBXO11), leading to its degradation by the proteasome. Expressed in bone marrow macrophages (at protein level). Expressed in innate lymphocytes, including tissue-resident conventional natural killer (cNK) cells in liver. Expressed also weakly in tissue-resident natural killer (trNK) and natural killer T (NKT) cells in liver. In terms of tissue distribution, expressed in bone marrow, spleen and lymph node but not in brain, heart, kidney, liver, ovary or muscle. Weak expression detected in the lung. As to expression, expressed only in the yolk sac. Expressed in embryo, yolk sac, placenta, splenocytes, and activated T-cells.

It is found in the nucleus. It localises to the cytoplasm. Transcription factor that mediates a transcriptional program in various innate and adaptive immune tissue-resident lymphocyte T cell types such as tissue-resident memory T (Trm), natural killer (trNK) and natural killer T (NKT) cells and negatively regulates gene expression of proteins that promote the egress of tissue-resident T-cell populations from non-lymphoid organs. Plays a role in the development, retention and long-term establishment of adaptive and innate tissue-resident lymphocyte T cell types in non-lymphoid organs, such as the skin and gut, but also in other nonbarrier tissues like liver and kidney, and therefore may provide immediate immunological protection against reactivating infections or viral reinfection. Binds specifically to the PRDI element in the promoter of the beta-interferon gene. Drives the maturation of B-lymphocytes into Ig secreting cells. Associates with the transcriptional repressor ZNF683 to chromatin at gene promoter regions. Binds to the promoter and acts as a transcriptional repressor of IRF8, thereby promotes transcription of osteoclast differentiation factors such as NFATC1 and EEIG1. This is PR domain zinc finger protein 1 (Prdm1) from Mus musculus (Mouse).